The primary structure comprises 582 residues: Transcription factor tau subunit sfc6 (582 aa).

The interval 1-97 is disordered; sequence MGPKSKEYEN…SAKKQSSKGL (97 aa). Acidic residues predominate over residues 18 to 39; it reads EDNDDDGDFVLENVMSEEDIEI. Over residues 63–87 the composition is skewed to polar residues; sequence QPLTPSSSKGAGNEPKSQNSSTTRG. 3 WD repeats span residues 221–262, 268–314, and 326–369; these read TQFL…NFKS, HDWG…VKFH, and FNDS…ECPL.

In terms of assembly, component of the TFIIIC complex including sfc1, sfc3, sfc4, sfc6 and sfc7. The subunits are organized in two globular domains, tauA and tauB, connected by a proteolysis-sensitive and flexible linker. Interacts with sfc1, sfc3 and sfc4.

The protein localises to the nucleus. TFIIIC mediates tRNA and 5S RNA gene activation by binding to intragenic promoter elements. Upstream of the transcription start site, TFIIIC assembles the initiation complex TFIIIB-TFIIIC-tDNA, which is sufficient for RNA polymerase III recruitment and function. Part of the tauB domain of TFIIIC that binds boxB DNA promoter sites of tRNA and similar genes. Cooperates with sfc3 in DNA binding. Localizes to chromatin insulator sequence without recruiting RNA polymerase III and plays a role in nuclear organization. This Schizosaccharomyces pombe (strain 972 / ATCC 24843) (Fission yeast) protein is Transcription factor tau subunit sfc6.